The chain runs to 347 residues: 5-deoxyribose 1-phosphate isomerase (347 aa).

Substrate is bound by residues 48-50 (RGA), Arg91, and Gln198. Asp239 functions as the Proton donor in the catalytic mechanism. 249-250 (NK) lines the substrate pocket.

This sequence belongs to the EIF-2B alpha/beta/delta subunits family. DrdI subfamily.

The enzyme catalyses 5-deoxy-alpha-D-ribose 1-phosphate = 5-deoxy-D-ribulose 1-phosphate. The protein operates within carbohydrate degradation. Catalyzes the isomerization of 5-deoxy-alpha-D-ribose 1-phosphate to 5-deoxy-D-ribulose 1-phosphate, as part of a 5-deoxyribose salvage pathway that recycles this toxic radical SAM enzyme by-product to mainstream metabolites. The polypeptide is 5-deoxyribose 1-phosphate isomerase (Bacillus cereus (strain ATCC 14579 / DSM 31 / CCUG 7414 / JCM 2152 / NBRC 15305 / NCIMB 9373 / NCTC 2599 / NRRL B-3711)).